Reading from the N-terminus, the 666-residue chain is Probable potassium transport system protein Kup (666 aa).

12 helical membrane-spanning segments follow: residues 53 to 73, 89 to 109, 144 to 164, 181 to 201, 212 to 232, 247 to 267, 291 to 311, 324 to 344, 381 to 401, 411 to 431, 441 to 461, and 463 to 483; these read FWAL…TSPL, VTPV…FIVV, LLLL…SMIT, PEFG…LFAV, AFAP…ALHI, AIHF…LVFL, WFCL…ALIL, LAPA…TVIA, IYLP…VLLF, YGIA…VVVW, AAAL…ANLL, and LLDG…LIWT.

The protein belongs to the HAK/KUP transporter (TC 2.A.72) family.

The protein localises to the cell inner membrane. The catalysed reaction is K(+)(in) + H(+)(in) = K(+)(out) + H(+)(out). Transport of potassium into the cell. Likely operates as a K(+):H(+) symporter. The polypeptide is Probable potassium transport system protein Kup (Nitrobacter hamburgensis (strain DSM 10229 / NCIMB 13809 / X14)).